Consider the following 240-residue polypeptide: MVKPKYQRVVLKLSGEALAGEDGFGIKPPVIKEIVQEIKEVHELGIEMAIVVGGGNIWRGQIGAQMGMERAQADYMGMLATVMNALALQDTLENLGVPTRVQTSIEMRQIAEPYIRRRAERHLEKGRVVIFAGGTGNPYFSTDTTAALRAAEVDADVILMAKNNVDGVYSADPRVDETATKFEELTHLDVISKGLQVMDSTASSLSMDNDIPLVVFNLNEAGNIRRAILGENIGTTVRGK.

An ATP-binding site is contributed by 12–15 (KLSG). Residues 20–25 (GEDGFG) are involved in allosteric activation by GTP. UMP is bound at residue Gly-54. Residues Gly-55 and Arg-59 each coordinate ATP. Residues Asp-74 and 135 to 142 (TGNPYFST) contribute to the UMP site. 3 residues coordinate ATP: Asn-163, Tyr-169, and Asp-172.

This sequence belongs to the UMP kinase family. Homohexamer.

It is found in the cytoplasm. It carries out the reaction UMP + ATP = UDP + ADP. It functions in the pathway pyrimidine metabolism; CTP biosynthesis via de novo pathway; UDP from UMP (UMPK route): step 1/1. With respect to regulation, allosterically activated by GTP. Probably inhibited by UTP. Its function is as follows. Catalyzes the reversible phosphorylation of UMP to UDP. The protein is Uridylate kinase (pyrH) of Enterococcus faecalis (strain ATCC 700802 / V583).